A 924-amino-acid polypeptide reads, in one-letter code: Autophagy-related protein 9B (924 aa).

The disordered stretch occupies residues 1–144 (MVSRMGWGGR…QDSPGLRVGP (144 aa)). Residues 1–207 (MVSRMGWGGR…KIYSYHQRNG (207 aa)) are Cytoplasmic-facing. The span at 17–27 (WGDLGPGSVPL) shows a compositional bias: low complexity. Residues 28–40 (LPMPLPPPPPPSC) show a composition bias toward pro residues. A compositionally biased stretch (polar residues) spans 78–88 (LQGTGASQSCH). The segment covering 98 to 113 (PTQAQPAMTPASASPS) has biased composition (low complexity). Residues 151 to 154 (YERL) carry the Tyrosine-based sorting signal motif. A helical membrane pass occupies residues 208–228 (FACILLEDVFQLGQFIFIVTF). The Lumenal portion of the chain corresponds to 229–276 (TTFLLRCVDYNVLFANQPSNHTRPGPFHSKVTLSDAILPSAQCAERIR). The chain crosses the membrane as a helical span at residues 277–297 (SSPLLVLLLVLAAGFWLVQLL). Residues 298–438 (RSVCNLFSYW…GALAARWGRT (141 aa)) lie on the Cytoplasmic side of the membrane. The stretch at 439 to 459 (VLLLAALNLALSPLVLAWQVL) is an intramembrane region. Residues 460–526 (HVFYSHVELL…AAPPAPLRTL (67 aa)) lie on the Cytoplasmic side of the membrane. Residues 527 to 547 (LARQLVFFAGALFAALLVLTV) form a helical membrane-spanning segment. Topologically, residues 548–551 (YDED) are lumenal. The chain crosses the membrane as a helical span at residues 552-572 (VLAVEHVLTAMTALGVTATVA). The Cytoplasmic segment spans residues 573-624 (RSFIPEEQCQGRAPQLLLQTALAHMHYLPEEPGPGGRDRAYRQMAQLLQYRA). An intramembrane segment occupies 625–645 (VSLLEELLSPLLTPLFLLFWF). At 646-924 (RPRALEIIDF…KEPDRASCTD (279 aa)) the chain is on the cytoplasmic side. Positions 847-924 (QQEPWGEAAA…KEPDRASCTD (78 aa)) are disordered. Residues 878–890 (SWSSDGSSPASSP) are compositionally biased toward low complexity. The segment covering 913–924 (TQKEPDRASCTD) has biased composition (basic and acidic residues).

Belongs to the ATG9 family. Homotrimer; forms a homotrimer with a central pore that forms a path between the two membrane leaflets. Highly expressed in placenta (trophoblast cells) and pituitary gland. Not expressed in vascular endothelial.

It is found in the preautophagosomal structure membrane. The enzyme catalyses a 1,2-diacyl-sn-glycero-3-phosphocholine(in) = a 1,2-diacyl-sn-glycero-3-phosphocholine(out). It catalyses the reaction a 1,2-diacyl-sn-glycero-3-phospho-L-serine(in) = a 1,2-diacyl-sn-glycero-3-phospho-L-serine(out). It carries out the reaction a 1,2-diacyl-sn-glycero-3-phosphoethanolamine(in) = a 1,2-diacyl-sn-glycero-3-phosphoethanolamine(out). Its function is as follows. Phospholipid scramblase involved in autophagy by mediating autophagosomal membrane expansion. Cycles between the preautophagosomal structure/phagophore assembly site (PAS) and the cytoplasmic vesicle pool and supplies membrane for the growing autophagosome. Lipid scramblase activity plays a key role in preautophagosomal structure/phagophore assembly by distributing the phospholipids that arrive through ATG2 (ATG2A or ATG2B) from the cytoplasmic to the luminal leaflet of the bilayer, thereby driving autophagosomal membrane expansion. In addition to autophagy, also plays a role in necrotic cell death. The sequence is that of Autophagy-related protein 9B (ATG9B) from Homo sapiens (Human).